We begin with the raw amino-acid sequence, 328 residues long: 3-ketodihydrosphingosine reductase TSC10 (328 aa).

L16 contributes to the NADP(+) binding site. Residues G19, S21, and G23 each contribute to the NADPH site. The GXSXG motif lies at 19–23; the sequence is GASQG. L24 contributes to the NADP(+) binding site. Positions 44, 48, and 73 each coordinate NADPH. D73 is an NADP(+) binding site. S161 acts as the Proton donor in catalysis. 3 residues coordinate NADP(+): Y175, K179, and S210. The active-site Proton acceptor is the Y175. Residue K179 is the Lowers pKa of active site Tyr of the active site. Residues 277 to 297 traverse the membrane as a helical segment; it reads FFQVIVSFIFSIIAPIANYVV.

Belongs to the short-chain dehydrogenases/reductases (SDR) family.

It localises to the endoplasmic reticulum membrane. The enzyme catalyses sphinganine + NADP(+) = 3-oxosphinganine + NADPH + H(+). It functions in the pathway lipid metabolism; sphingolipid metabolism. In terms of biological role, catalyzes the reduction of 3'-oxosphinganine (3-ketodihydrosphingosine/KDS) to sphinganine (dihydrosphingosine/DHS), the second step of de novo sphingolipid biosynthesis. This chain is 3-ketodihydrosphingosine reductase TSC10 (TSC10), found in Debaryomyces hansenii (strain ATCC 36239 / CBS 767 / BCRC 21394 / JCM 1990 / NBRC 0083 / IGC 2968) (Yeast).